The following is a 239-amino-acid chain: MADS-box transcription factor 34 (239 aa).

The region spanning 1–61 (MGRGKVVLQR…GRLYQFSSSS (61 aa)) is the MADS-box domain. A K-box domain is found at 88–178 (MQNNYQEYVN…KRKLDEIDVE (91 aa)). Residues 179–208 (AAPPQPPWNGNCSNGHGGGGGVFSSEPPQP) are disordered.

In terms of tissue distribution, highly expressed in leaves and at low levels in roots and spikelets (rice flower).

The protein localises to the nucleus. Probable transcription factor. This Oryza sativa subsp. japonica (Rice) protein is MADS-box transcription factor 34 (MADS34).